The sequence spans 664 residues: Exoribonuclease 2 (664 aa).

The RNB domain maps to 193–521 (RIDMTHIPFV…INHRMLKALI (329 aa)). The region spanning 568–650 (QTLFTGEIFD…ENRSLVAKPT (83 aa)) is the S1 motif domain.

Belongs to the RNR ribonuclease family. RNase II subfamily.

It is found in the cytoplasm. It catalyses the reaction Exonucleolytic cleavage in the 3'- to 5'-direction to yield nucleoside 5'-phosphates.. Involved in mRNA degradation. Hydrolyzes single-stranded polyribonucleotides processively in the 3' to 5' direction. The chain is Exoribonuclease 2 from Vibrio vulnificus (strain YJ016).